The primary structure comprises 89 residues: MNLTLILFLIGILGFVLNRKNIILMLISIEIMLLAITFLILVSSLNIDDILGQTYAIYIIVVAGAESAIGLGILVAFYRLRGSVAIEYK.

Helical transmembrane passes span Met-1 to Asn-21, Ile-22 to Val-42, and Ile-57 to Phe-77.

This sequence belongs to the complex I subunit 4L family.

The protein resides in the mitochondrion membrane. It carries out the reaction a ubiquinone + NADH + 5 H(+)(in) = a ubiquinol + NAD(+) + 4 H(+)(out). Functionally, core subunit of the mitochondrial membrane respiratory chain NADH dehydrogenase (Complex I) that is believed to belong to the minimal assembly required for catalysis. Complex I functions in the transfer of electrons from NADH to the respiratory chain. The immediate electron acceptor for the enzyme is believed to be ubiquinone. This is NADH-ubiquinone oxidoreductase chain 4L (ND4L) from Cryphonectria parasitica (Chestnut blight fungus).